Consider the following 82-residue polypeptide: Cytochrome b559 subunit alpha (82 aa).

Residues 22–36 form a helical membrane-spanning segment; the sequence is VIHAITLPSIFLAGF. Histidine 24 serves as a coordination point for heme.

Belongs to the PsbE/PsbF family. Heterodimer of an alpha subunit and a beta subunit. PSII is composed of 1 copy each of membrane proteins PsbA, PsbB, PsbC, PsbD, PsbE, PsbF, PsbH, PsbI, PsbJ, PsbK, PsbL, PsbM, PsbT, PsbX, PsbY, PsbZ, Psb30/Ycf12, peripheral proteins PsbO, CyanoQ (PsbQ), PsbU, PsbV and a large number of cofactors. It forms dimeric complexes. Heme b serves as cofactor.

It localises to the cellular thylakoid membrane. This b-type cytochrome is tightly associated with the reaction center of photosystem II (PSII). PSII is a light-driven water:plastoquinone oxidoreductase that uses light energy to abstract electrons from H(2)O, generating O(2) and a proton gradient subsequently used for ATP formation. It consists of a core antenna complex that captures photons, and an electron transfer chain that converts photonic excitation into a charge separation. The protein is Cytochrome b559 subunit alpha of Synechococcus sp. (strain CC9311).